Here is a 199-residue protein sequence, read N- to C-terminus: NAD(P)H dehydrogenase (quinone) (199 aa).

The region spanning 4-190 is the Flavodoxin-like domain; that stretch reads VLVLYYSAYG…NGARYQGRTI (187 aa). Residues 10–15 and 78–80 contribute to the FMN site; these read SAYGHI and TRF. Tyr-12 is an NAD(+) binding site. A substrate-binding site is contributed by Trp-98. FMN contacts are provided by residues 113–119 and His-134; that span reads STATQHG.

Belongs to the WrbA family. FMN is required as a cofactor.

The enzyme catalyses a quinone + NADH + H(+) = a quinol + NAD(+). It carries out the reaction a quinone + NADPH + H(+) = a quinol + NADP(+). The protein is NAD(P)H dehydrogenase (quinone) of Afipia carboxidovorans (strain ATCC 49405 / DSM 1227 / KCTC 32145 / OM5) (Oligotropha carboxidovorans).